We begin with the raw amino-acid sequence, 357 residues long: Anthranilate phosphoribosyltransferase (357 aa).

Residues G91, 94–95, T99, 101–104, 119–127, and S131 each bind 5-phospho-alpha-D-ribose 1-diphosphate; these read GD, NIST, and KHGNRSVSS. Position 91 (G91) interacts with anthranilate. S103 is a binding site for Mg(2+). N122 is an anthranilate binding site. R177 contacts anthranilate. Mg(2+)-binding residues include D235 and E236.

The protein belongs to the anthranilate phosphoribosyltransferase family. In terms of assembly, homodimer. Requires Mg(2+) as cofactor.

It catalyses the reaction N-(5-phospho-beta-D-ribosyl)anthranilate + diphosphate = 5-phospho-alpha-D-ribose 1-diphosphate + anthranilate. It functions in the pathway amino-acid biosynthesis; L-tryptophan biosynthesis; L-tryptophan from chorismate: step 2/5. In terms of biological role, catalyzes the transfer of the phosphoribosyl group of 5-phosphorylribose-1-pyrophosphate (PRPP) to anthranilate to yield N-(5'-phosphoribosyl)-anthranilate (PRA). The sequence is that of Anthranilate phosphoribosyltransferase from Shewanella baltica (strain OS185).